A 61-amino-acid chain; its full sequence is Photosystem II reaction center protein K (61 aa).

Residues 1–24 (MLNIFNLVCICIHSVLYSSSFFSA) constitute a propeptide that is removed on maturation. The chain crosses the membrane as a helical span at residues 36–56 (IVDIMPVIPLLFFLLAFVWQA).

Belongs to the PsbK family. As to quaternary structure, PSII is composed of 1 copy each of membrane proteins PsbA, PsbB, PsbC, PsbD, PsbE, PsbF, PsbH, PsbI, PsbJ, PsbK, PsbL, PsbM, PsbT, PsbX, PsbY, PsbZ, Psb30/Ycf12, at least 3 peripheral proteins of the oxygen-evolving complex and a large number of cofactors. It forms dimeric complexes.

Its subcellular location is the plastid. It localises to the chloroplast thylakoid membrane. Its function is as follows. One of the components of the core complex of photosystem II (PSII). PSII is a light-driven water:plastoquinone oxidoreductase that uses light energy to abstract electrons from H(2)O, generating O(2) and a proton gradient subsequently used for ATP formation. It consists of a core antenna complex that captures photons, and an electron transfer chain that converts photonic excitation into a charge separation. The chain is Photosystem II reaction center protein K from Glycine max (Soybean).